The sequence spans 559 residues: MILKSSIDRLLQTIDIVEVISSYVDLRKSGSNYMACCPFHEERSASFSVNQVKGFYYCFGCGASGDSIKFVMAFEKLSFVEALEKLAHRFNIALEYDKGVYYDHKEDYHLLEMVSSLYQEELFNAPFFLNYLQKRGLSMESIKAFKLGLCTNKIDYGIENKGLNKDKLIELGVLGKSDKEDKTYLRFLDRIMFPIYSPSAQVVGFGGRTLKEKAAKYINSPQNKLFDKSSLLYGYHLAKEHIYKQKQVIVTEGYLDVILLHQAGFKNAIATLGTALTPSHLPLLKKGDPEILLSYDGDKAGRNAAYKASLMLAKEQRKGGVILFENNLDPADMIANHQIETLKNWLSRPIAFIEFVLRHMAGSYLLDDPLEKDKALKEMLGFLKNFSLLLQNEYKPLIATLLQAPLHVLGIREPVSFQPFYPKTEKPNRPQKFAHVSSMPSLEFLEKLVIRYLLEDRSLLDLAVGYIHSGVFLHKKQEFDALCQEKLDDPKLVALLLDANLPLKKGGFEKELRLLILRYFERQLKEIPKSPLSFSEKMIFLKRARQAIMKLKQGELVAI.

The CHC2-type zinc-finger motif lies at 37–61; that stretch reads CPFHEERSASFSVNQVKGFYYCFGC. Residues 246-327 form the Toprim domain; the sequence is KQVIVTEGYL…KGGVILFENN (82 aa). Mg(2+) contacts are provided by Glu-252, Asp-296, and Asp-298.

It belongs to the DnaG primase family. Monomer. Interacts with DnaB. Zn(2+) serves as cofactor. Mg(2+) is required as a cofactor.

It carries out the reaction ssDNA + n NTP = ssDNA/pppN(pN)n-1 hybrid + (n-1) diphosphate.. Functionally, RNA polymerase that catalyzes the synthesis of short RNA molecules used as primers for DNA polymerase during DNA replication. The protein is DNA primase of Helicobacter pylori (strain J99 / ATCC 700824) (Campylobacter pylori J99).